Consider the following 904-residue polypeptide: uncharacterized protein (904 aa).

2 disordered regions span residues 247-275 (KIGKSRTTEDVSMPPLHRGVGTPANSLEF) and 328-360 (GDSQTPGLHYPPTAGAQTLSPTSHPSSANHHFS). The segment covering 342–360 (GAQTLSPTSHPSSANHHFS) has biased composition (polar residues). Residues 778-798 (VVQGMILMFAGGKLIFGGRVL) form a helical membrane-spanning segment.

It localises to the membrane. This is an uncharacterized protein from Homo sapiens (Human).